The sequence spans 386 residues: Succinate--CoA ligase [ADP-forming] subunit beta (386 aa).

Residues 9–244 (KEILHKFNVP…YDEEVKEEIE (236 aa)) form the ATP-grasp domain. ATP-binding positions include K46, 53-55 (GRG), E99, S102, and E107. Residues N199 and D213 each coordinate Mg(2+). Substrate contacts are provided by residues N264 and 321-323 (GIM).

It belongs to the succinate/malate CoA ligase beta subunit family. In terms of assembly, heterotetramer of two alpha and two beta subunits. Mg(2+) serves as cofactor.

It carries out the reaction succinate + ATP + CoA = succinyl-CoA + ADP + phosphate. The enzyme catalyses GTP + succinate + CoA = succinyl-CoA + GDP + phosphate. Its pathway is carbohydrate metabolism; tricarboxylic acid cycle; succinate from succinyl-CoA (ligase route): step 1/1. Functionally, succinyl-CoA synthetase functions in the citric acid cycle (TCA), coupling the hydrolysis of succinyl-CoA to the synthesis of either ATP or GTP and thus represents the only step of substrate-level phosphorylation in the TCA. The beta subunit provides nucleotide specificity of the enzyme and binds the substrate succinate, while the binding sites for coenzyme A and phosphate are found in the alpha subunit. This Wolbachia sp. subsp. Brugia malayi (strain TRS) protein is Succinate--CoA ligase [ADP-forming] subunit beta.